A 1286-amino-acid chain; its full sequence is DNA-directed RNA polymerase subunit beta' (1286 aa).

Residues Cys-66, Cys-68, Cys-81, and Cys-84 each coordinate Zn(2+). Asp-527, Asp-529, and Asp-531 together coordinate Mg(2+). Zn(2+) is bound by residues Cys-905, Cys-981, Cys-988, and Cys-991.

Belongs to the RNA polymerase beta' chain family. The RNAP catalytic core consists of 2 alpha, 1 beta, 1 beta' and 1 omega subunit. When a sigma factor is associated with the core the holoenzyme is formed, which can initiate transcription. Mg(2+) serves as cofactor. Zn(2+) is required as a cofactor.

The catalysed reaction is RNA(n) + a ribonucleoside 5'-triphosphate = RNA(n+1) + diphosphate. Functionally, DNA-dependent RNA polymerase catalyzes the transcription of DNA into RNA using the four ribonucleoside triphosphates as substrates. The protein is DNA-directed RNA polymerase subunit beta' of Mycoplasmoides gallisepticum (strain R(low / passage 15 / clone 2)) (Mycoplasma gallisepticum).